Here is a 248-residue protein sequence, read N- to C-terminus: Proteasome subunit alpha (248 aa).

Belongs to the peptidase T1A family. The 20S proteasome core is composed of 14 alpha and 14 beta subunits that assemble into four stacked heptameric rings, resulting in a barrel-shaped structure. The two inner rings, each composed of seven catalytic beta subunits, are sandwiched by two outer rings, each composed of seven alpha subunits. The catalytic chamber with the active sites is on the inside of the barrel. Has a gated structure, the ends of the cylinder being occluded by the N-termini of the alpha-subunits. Is capped at one or both ends by the proteasome regulatory ATPase, PAN.

The protein localises to the cytoplasm. Its activity is regulated as follows. The formation of the proteasomal ATPase PAN-20S proteasome complex, via the docking of the C-termini of PAN into the intersubunit pockets in the alpha-rings, triggers opening of the gate for substrate entry. Interconversion between the open-gate and close-gate conformations leads to a dynamic regulation of the 20S proteasome proteolysis activity. Component of the proteasome core, a large protease complex with broad specificity involved in protein degradation. This is Proteasome subunit alpha from Methanothermobacter thermautotrophicus (strain ATCC 29096 / DSM 1053 / JCM 10044 / NBRC 100330 / Delta H) (Methanobacterium thermoautotrophicum).